The sequence spans 83 residues: Disintegrin bitistatin (83 aa).

The Disintegrin domain maps to 2-83 (PPVCGNKILE…GKSSDCPWNH (82 aa)). Cystine bridges form between Cys5-Cys24, Cys5-Cys34, Cys16-Cys29, Cys16-Cys34, Cys18-Cys24, Cys18-Cys29, Cys28-Cys51, Cys42-Cys48, Cys47-Cys72, and Cys60-Cys79. A Cell attachment site motif is present at residues 64–66 (RGD).

Belongs to the venom metalloproteinase (M12B) family. P-II subfamily. P-IIa sub-subfamily. As to quaternary structure, monomer. In terms of processing, exists in 3 forms in the venom. The forms A, B, and C are present at 53%, 32% and 15%. The forms A and B differ by their disulfide bond pattern in the N-terminal part. No information is known about form C. In terms of tissue distribution, expressed by the venom gland.

It localises to the secreted. Inhibits fibrinogen interaction with platelets. Acts by binding to alpha-IIb/beta-3 (ITGA2B/ITGB3) on the platelet surface and inhibits aggregation induced by ADP, thrombin, platelet-activating factor and collagen. This Bitis arietans (African puff adder) protein is Disintegrin bitistatin.